A 126-amino-acid polypeptide reads, in one-letter code: NADPH-dependent 7-cyano-7-deazaguanine reductase (126 aa).

The active-site Thioimide intermediate is the Cys40. Asp47 acts as the Proton donor in catalysis. Substrate is bound by residues 62–64 (IEL) and 81–82 (HE).

Belongs to the GTP cyclohydrolase I family. QueF type 1 subfamily.

It localises to the cytoplasm. The catalysed reaction is 7-aminomethyl-7-carbaguanine + 2 NADP(+) = 7-cyano-7-deazaguanine + 2 NADPH + 3 H(+). It functions in the pathway tRNA modification; tRNA-queuosine biosynthesis. Its function is as follows. Catalyzes the NADPH-dependent reduction of 7-cyano-7-deazaguanine (preQ0) to 7-aminomethyl-7-deazaguanine (preQ1). The polypeptide is NADPH-dependent 7-cyano-7-deazaguanine reductase (Campylobacter jejuni subsp. doylei (strain ATCC BAA-1458 / RM4099 / 269.97)).